The primary structure comprises 156 residues: Snaclec jerdonibitin subunit alpha (156 aa).

The N-terminal stretch at 1-23 is a signal peptide; sequence MGRFIFVSFGLLVVFLSLSGTGA. 3 disulfides stabilise this stretch: cysteine 25–cysteine 36, cysteine 53–cysteine 150, and cysteine 125–cysteine 142. Positions 32–151 constitute a C-type lectin domain; sequence FRQYCYRVFK…CGQQHLFMCK (120 aa).

This sequence belongs to the snaclec family. In terms of assembly, heterodimer of subunits alpha and beta; disulfide-linked. Expressed by the venom gland.

The protein localises to the secreted. In terms of biological role, snaclec that dose-dependently inhibits platelet aggregation induced by ristocetin or low-dose thrombin, but not by high-dose thrombin. Binds to GPIbalpha (GP1BA). In vivo, also dose-dependently induces thrombocytopenia of mice and platelet counts remains at very low level even after 18 hours intravenous injection. This Protobothrops jerdonii (Jerdon's pitviper) protein is Snaclec jerdonibitin subunit alpha.